The following is a 115-amino-acid chain: Ribonuclease P protein component (115 aa).

It belongs to the RnpA family. Consists of a catalytic RNA component (M1 or rnpB) and a protein subunit.

The enzyme catalyses Endonucleolytic cleavage of RNA, removing 5'-extranucleotides from tRNA precursor.. In terms of biological role, RNaseP catalyzes the removal of the 5'-leader sequence from pre-tRNA to produce the mature 5'-terminus. It can also cleave other RNA substrates such as 4.5S RNA. The protein component plays an auxiliary but essential role in vivo by binding to the 5'-leader sequence and broadening the substrate specificity of the ribozyme. In Buchnera aphidicola subsp. Acyrthosiphon pisum (strain APS) (Acyrthosiphon pisum symbiotic bacterium), this protein is Ribonuclease P protein component.